An 81-amino-acid chain; its full sequence is ATP synthase subunit c, chloroplastic (81 aa).

2 helical membrane passes run 3–23 (PLISAASVIAAGLAVGLASIG) and 53–73 (LLLSLAFMEALTIYGLVVALA).

Belongs to the ATPase C chain family. F-type ATPases have 2 components, F(1) - the catalytic core - and F(0) - the membrane proton channel. F(1) has five subunits: alpha(3), beta(3), gamma(1), delta(1), epsilon(1). F(0) has four main subunits: a(1), b(1), b'(1) and c(10-14). The alpha and beta chains form an alternating ring which encloses part of the gamma chain. F(1) is attached to F(0) by a central stalk formed by the gamma and epsilon chains, while a peripheral stalk is formed by the delta, b and b' chains.

The protein localises to the plastid. The protein resides in the chloroplast thylakoid membrane. In terms of biological role, f(1)F(0) ATP synthase produces ATP from ADP in the presence of a proton or sodium gradient. F-type ATPases consist of two structural domains, F(1) containing the extramembraneous catalytic core and F(0) containing the membrane proton channel, linked together by a central stalk and a peripheral stalk. During catalysis, ATP synthesis in the catalytic domain of F(1) is coupled via a rotary mechanism of the central stalk subunits to proton translocation. Key component of the F(0) channel; it plays a direct role in translocation across the membrane. A homomeric c-ring of between 10-14 subunits forms the central stalk rotor element with the F(1) delta and epsilon subunits. The polypeptide is ATP synthase subunit c, chloroplastic (Huperzia lucidula (Shining clubmoss)).